The following is a 307-amino-acid chain: Probable 2-methylisocitrate lyase 2 (307 aa).

53 to 55 (SGA) is a binding site for substrate. Positions 92 and 94 each coordinate Mg(2+). Substrate contacts are provided by residues 129–130 (CG), arginine 164, glutamate 194, 216–218 (NMT), arginine 247, and arginine 276.

It belongs to the isocitrate lyase/PEP mutase superfamily. Methylisocitrate lyase family. As to quaternary structure, homotetramer; dimer of dimers. It depends on Mg(2+) as a cofactor.

The catalysed reaction is (2S,3R)-3-hydroxybutane-1,2,3-tricarboxylate = pyruvate + succinate. The protein operates within organic acid metabolism; propanoate degradation. Involved in the catabolism of short chain fatty acids (SCFA) via the 2-methylcitrate cycle I (propionate degradation route). Catalyzes the thermodynamically favored C-C bond cleavage of (2R,3S)-2-methylisocitrate to yield pyruvate and succinate via an alpha-carboxy-carbanion intermediate. The chain is Probable 2-methylisocitrate lyase 2 from Corynebacterium glutamicum (strain ATCC 13032 / DSM 20300 / JCM 1318 / BCRC 11384 / CCUG 27702 / LMG 3730 / NBRC 12168 / NCIMB 10025 / NRRL B-2784 / 534).